A 247-amino-acid polypeptide reads, in one-letter code: Sulfate transporter CysZ (247 aa).

Transmembrane regions (helical) follow at residues 29–49 (FVVL…FYLF), 66–86 (FLSW…LATF), 141–160 (LLYI…IPAL), 164–186 (VGPV…DYPF), and 212–232 (VLVS…PVAI).

Belongs to the CysZ family.

The protein localises to the cell inner membrane. Functionally, high affinity, high specificity proton-dependent sulfate transporter, which mediates sulfate uptake. Provides the sulfur source for the cysteine synthesis pathway. In Vibrio parahaemolyticus serotype O3:K6 (strain RIMD 2210633), this protein is Sulfate transporter CysZ.